Consider the following 317-residue polypeptide: Uridylate kinase (317 aa).

Residue 9–12 (KISG) participates in ATP binding. Residue glycine 49 participates in UMP binding. Residues glycine 50 and arginine 54 each contribute to the ATP site. Residues aspartate 69 and 130-137 (TGRPYFTT) each bind UMP. ATP is bound by residues asparagine 158, tyrosine 164, and aspartate 167.

Belongs to the UMP kinase family. In terms of assembly, homohexamer.

It localises to the cytoplasm. It carries out the reaction UMP + ATP = UDP + ADP. The protein operates within pyrimidine metabolism; CTP biosynthesis via de novo pathway; UDP from UMP (UMPK route): step 1/1. With respect to regulation, inhibited by UTP. Its function is as follows. Catalyzes the reversible phosphorylation of UMP to UDP. This Malacoplasma penetrans (strain HF-2) (Mycoplasma penetrans) protein is Uridylate kinase.